The sequence spans 584 residues: Segmentation polarity homeobox protein engrailed (584 aa).

Disordered stretches follow at residues 1–27 (MALE…PQQH), 141–198 (EESD…SKPS), 343–380 (IGQA…SSST), 392–451 (CSSA…GGKN), and 465–492 (DRPS…PRTA). A compositionally biased stretch (pro residues) spans 12 to 23 (APSPPGCLPHSP). Residues 160–174 (TEEDEEEDDDIDVDD) show a composition bias toward acidic residues. The segment covering 189-198 (HQQSKQSKPS) has biased composition (polar residues). Composition is skewed to low complexity over residues 348–380 (STTP…SSST) and 392–405 (CSSA…SPSS). Over residues 478–489 (QPKDKTNDEKRP) the composition is skewed to basic and acidic residues. The homeobox DNA-binding region spans 486–545 (EKRPRTAFSSEQLARLKREFNENRYLTERRRQQLSSELGLNEAQIKIWFQNKRAKIKKST).

Belongs to the engrailed homeobox family.

The protein resides in the nucleus. Its function is as follows. This protein specifies the body segmentation pattern. It is required for the development of the central nervous system. Transcriptional regulator that repress activated promoters. This is Segmentation polarity homeobox protein engrailed (en) from Drosophila virilis (Fruit fly).